We begin with the raw amino-acid sequence, 346 residues long: Phosphoribosylformylglycinamidine cyclo-ligase (346 aa).

It belongs to the AIR synthase family.

The protein resides in the cytoplasm. It carries out the reaction 2-formamido-N(1)-(5-O-phospho-beta-D-ribosyl)acetamidine + ATP = 5-amino-1-(5-phospho-beta-D-ribosyl)imidazole + ADP + phosphate + H(+). Its pathway is purine metabolism; IMP biosynthesis via de novo pathway; 5-amino-1-(5-phospho-D-ribosyl)imidazole from N(2)-formyl-N(1)-(5-phospho-D-ribosyl)glycinamide: step 2/2. This chain is Phosphoribosylformylglycinamidine cyclo-ligase, found in Alteromonas mediterranea (strain DSM 17117 / CIP 110805 / LMG 28347 / Deep ecotype).